The following is a 102-amino-acid chain: PqqA binding protein (102 aa).

This sequence belongs to the PqqD family. As to quaternary structure, monomer. Interacts with PqqE.

It participates in cofactor biosynthesis; pyrroloquinoline quinone biosynthesis. Functions as a PqqA binding protein and presents PqqA to PqqE, in the pyrroloquinoline quinone (PQQ) biosynthetic pathway. This is PqqA binding protein from Rhodopseudomonas palustris (strain BisB5).